A 521-amino-acid chain; its full sequence is Bacillolysin (521 aa).

A signal peptide spans 1–27 (MGLGKKLSVAVAASFMSLTISLPGVQA). Positions 28-221 (AENPQLKENL…ILKKQNKVEH (194 aa)) are cleaved as a propeptide — activation peptide. Gln283 and Asp360 together coordinate Ca(2+). His364 serves as a coordination point for Zn(2+). The active site involves Glu365. Positions 368 and 388 each coordinate Zn(2+). Asp399, Asp402, Asp404, Glu407, and Val411 together coordinate Ca(2+). His449 serves as the catalytic Proton donor.

Belongs to the peptidase M4 family. The cofactor is Ca(2+). Zn(2+) serves as cofactor.

The protein resides in the secreted. It carries out the reaction Similar, but not identical, to that of thermolysin.. Extracellular zinc metalloprotease. In Bacillus amyloliquefaciens (Bacillus velezensis), this protein is Bacillolysin (npr).